A 441-amino-acid polypeptide reads, in one-letter code: Ribosomal protein uS12 methylthiotransferase RimO (441 aa).

The MTTase N-terminal domain maps to 7 to 117 (PKISFVSLGC…VLEAVHRAKP (111 aa)). [4Fe-4S] cluster-binding residues include C16, C52, C81, C148, C152, and C155. The Radical SAM core domain occupies 134–371 (LTPRHYAYLK…MARQQVISAR (238 aa)). The 67-residue stretch at 374-440 (KRKVGTRQQI…AYDLHGTVAG (67 aa)) folds into the TRAM domain.

The protein belongs to the methylthiotransferase family. RimO subfamily. [4Fe-4S] cluster is required as a cofactor.

Its subcellular location is the cytoplasm. It carries out the reaction L-aspartate(89)-[ribosomal protein uS12]-hydrogen + (sulfur carrier)-SH + AH2 + 2 S-adenosyl-L-methionine = 3-methylsulfanyl-L-aspartate(89)-[ribosomal protein uS12]-hydrogen + (sulfur carrier)-H + 5'-deoxyadenosine + L-methionine + A + S-adenosyl-L-homocysteine + 2 H(+). Its function is as follows. Catalyzes the methylthiolation of an aspartic acid residue of ribosomal protein uS12. The polypeptide is Ribosomal protein uS12 methylthiotransferase RimO (Rhodopseudomonas palustris (strain BisB5)).